The chain runs to 138 residues: Small ribosomal subunit protein uS11c (138 aa).

The segment at 1 to 22 is disordered; that stretch reads MAKSIPKTGSRKNVRIGSRNQT.

This sequence belongs to the universal ribosomal protein uS11 family. In terms of assembly, part of the 30S ribosomal subunit.

It is found in the plastid. It localises to the chloroplast. The protein is Small ribosomal subunit protein uS11c of Phaseolus angularis (Azuki bean).